Reading from the N-terminus, the 351-residue chain is Glycerol-1-phosphate dehydrogenase [NAD(P)+] (351 aa).

NAD(+)-binding positions include 97–101 and 119–122; these read GKVID and TSPS. A substrate-binding site is contributed by Asp124. Ser128 provides a ligand contact to NAD(+). Asp171 lines the substrate pocket. The Zn(2+) site is built by Asp171 and His251. His255 contributes to the substrate binding site. Zn(2+) is bound at residue His267.

The protein belongs to the glycerol-1-phosphate dehydrogenase family. In terms of assembly, homodimer. Zn(2+) serves as cofactor.

Its subcellular location is the cytoplasm. The catalysed reaction is sn-glycerol 1-phosphate + NAD(+) = dihydroxyacetone phosphate + NADH + H(+). The enzyme catalyses sn-glycerol 1-phosphate + NADP(+) = dihydroxyacetone phosphate + NADPH + H(+). The protein operates within membrane lipid metabolism; glycerophospholipid metabolism. Functionally, catalyzes the NAD(P)H-dependent reduction of dihydroxyacetonephosphate (DHAP or glycerone phosphate) to glycerol 1-phosphate (G1P). The G1P thus generated is used as the glycerophosphate backbone of phospholipids in the cellular membranes of Archaea. This Saccharolobus islandicus (strain M.16.27) (Sulfolobus islandicus) protein is Glycerol-1-phosphate dehydrogenase [NAD(P)+].